Consider the following 688-residue polypeptide: Lipase (688 aa).

The N-terminal stretch at 1 to 35 (MKTRQNKYSIRKFSVGASSILIAALLFMGGGSAQA) is a signal peptide. The interval 31–309 (GSAQAAEQQQ…KSAKQKQYKN (279 aa)) is disordered. Positions 36 to 302 (AEQQQDKGTV…KNEDQTNKSA (267 aa)) are cleaved as a propeptide — removed in mature form. The span at 45–54 (VENSTTQSIG) shows a compositional bias: polar residues. The span at 68-79 (NKNVNEKSNVNS) shows a compositional bias: low complexity. 3 stretches are compositionally biased toward basic and acidic residues: residues 84-95 (ESLHNETPKNED), 103-117 (SQNDNKSESVVEQNK), and 126-143 (HSEEKPQQEQVELEKHAS). A compositionally biased stretch (polar residues) spans 144–172 (ENNQTLHSKAAQSNEDVKTKPSQLDNTAA). Residues 173–183 (KQEDSQKENLS) show a composition bias toward basic and acidic residues. The span at 184–211 (KQDTQSSKTTDLLRATAQNQSKDSQSTE) shows a compositional bias: polar residues. A compositionally biased stretch (basic and acidic residues) spans 240–267 (SKEEPLKVDKQANPTTDKDKSSKNDKGS). The span at 274–289 (LESNAVATTNKQSKQQ) shows a compositional bias: polar residues. The Nucleophile role is filled by Ser-418. The active-site Charge relay system is Asp-609. Asp-647 serves as a coordination point for Ca(2+). The Charge relay system role is filled by His-648. Residues Asp-650, Asp-655, and Asp-658 each coordinate Ca(2+).

It belongs to the AB hydrolase superfamily. Lipase family.

Its subcellular location is the secreted. The catalysed reaction is a triacylglycerol + H2O = a diacylglycerol + a fatty acid + H(+). In Staphylococcus epidermidis, this protein is Lipase (lip).